The chain runs to 478 residues: Siroheme synthase (478 aa).

Residues 1–207 (MTANVLFPLF…QRHAEAEAVL (207 aa)) are precorrin-2 dehydrogenase /sirohydrochlorin ferrochelatase. NAD(+) contacts are provided by residues 25-26 (KV) and 46-47 (PS). S132 bears the Phosphoserine mark. Residues 220–478 (GSVTLVGAGA…PCPPRTHPIS (259 aa)) are uroporphyrinogen-III C-methyltransferase. D252 (proton acceptor) is an active-site residue. K274 acts as the Proton donor in catalysis. S-adenosyl-L-methionine is bound by residues 305-307 (GGD), V310, 335-336 (TA), M387, and G416.

The protein in the N-terminal section; belongs to the precorrin-2 dehydrogenase / sirohydrochlorin ferrochelatase family. In the C-terminal section; belongs to the precorrin methyltransferase family.

It catalyses the reaction uroporphyrinogen III + 2 S-adenosyl-L-methionine = precorrin-2 + 2 S-adenosyl-L-homocysteine + H(+). The enzyme catalyses precorrin-2 + NAD(+) = sirohydrochlorin + NADH + 2 H(+). The catalysed reaction is siroheme + 2 H(+) = sirohydrochlorin + Fe(2+). It participates in cofactor biosynthesis; adenosylcobalamin biosynthesis; precorrin-2 from uroporphyrinogen III: step 1/1. Its pathway is cofactor biosynthesis; adenosylcobalamin biosynthesis; sirohydrochlorin from precorrin-2: step 1/1. The protein operates within porphyrin-containing compound metabolism; siroheme biosynthesis; precorrin-2 from uroporphyrinogen III: step 1/1. It functions in the pathway porphyrin-containing compound metabolism; siroheme biosynthesis; siroheme from sirohydrochlorin: step 1/1. It participates in porphyrin-containing compound metabolism; siroheme biosynthesis; sirohydrochlorin from precorrin-2: step 1/1. Its function is as follows. Multifunctional enzyme that catalyzes the SAM-dependent methylations of uroporphyrinogen III at position C-2 and C-7 to form precorrin-2 via precorrin-1. Then it catalyzes the NAD-dependent ring dehydrogenation of precorrin-2 to yield sirohydrochlorin. Finally, it catalyzes the ferrochelation of sirohydrochlorin to yield siroheme. This is Siroheme synthase from Xylella fastidiosa (strain M23).